The chain runs to 92 residues: Large ribosomal subunit protein bL28 (92 aa).

The protein belongs to the bacterial ribosomal protein bL28 family.

The polypeptide is Large ribosomal subunit protein bL28 (Borreliella afzelii (strain PKo) (Borrelia afzelii)).